A 185-amino-acid chain; its full sequence is MKNIILSTLVITTSVLVVNVAQADTNAFSVGYAQSKVQDFKNIRGVNVKYRYEDDSPVSFISSLSYLYGDRQASGSVEPEGIHYHDKFEVKYGSLMVGPAYRLSDNFSLYALAGVGTVKATFKEHSTQDGDSFSNKISSRKTGFAWGAGVQMNPLENIVVDVGYEGSNISSTKINGFNVGVGYRF.

Residues 1–23 (MKNIILSTLVITTSVLVVNVAQA) form the signal peptide.

Belongs to the outer membrane OOP (TC 1.B.6) superfamily. Ail family.

Its subcellular location is the cell outer membrane. Functionally, essential for full virulence and survival within macrophages. The sequence is that of Virulence membrane protein PagC (pagC) from Salmonella typhimurium (strain LT2 / SGSC1412 / ATCC 700720).